Consider the following 207-residue polypeptide: Outer-membrane lipoprotein LolB (207 aa).

Positions 1 to 21 are cleaved as a signal peptide; the sequence is MPTKTVRCLRLLPLASLLLAA. Residue Cys-22 is the site of N-palmitoyl cysteine attachment. The S-diacylglycerol cysteine moiety is linked to residue Cys-22.

This sequence belongs to the LolB family. In terms of assembly, monomer.

It localises to the cell outer membrane. Functionally, plays a critical role in the incorporation of lipoproteins in the outer membrane after they are released by the LolA protein. In Pectobacterium atrosepticum (strain SCRI 1043 / ATCC BAA-672) (Erwinia carotovora subsp. atroseptica), this protein is Outer-membrane lipoprotein LolB.